The sequence spans 222 residues: Uridine diphosphate glucose pyrophosphatase NUDT14 (222 aa).

In terms of domain architecture, Nudix hydrolase spans 38–206 (KTHDSVTVLL…DIPKTLGVIF (169 aa)). A Nudix box motif is present at residues 111 to 129 (PGLSLEEVACKEAWEECGY).

It belongs to the Nudix hydrolase family. In terms of assembly, homodimer. Requires Mg(2+) as cofactor.

The protein resides in the cytoplasm. The catalysed reaction is UDP-sugar + H2O = UMP + alpha-D-aldose 1-phosphate.. In terms of biological role, hydrolyzes UDP-glucose to glucose 1-phosphate and UMP and ADP-ribose to ribose 5-phosphate and AMP. The physiological substrate is probably UDP-glucose. Poor activity on other substrates such as ADP-glucose, CDP-glucose, GDP-glucose and GDP-mannose. The sequence is that of Uridine diphosphate glucose pyrophosphatase NUDT14 (NUDT14) from Homo sapiens (Human).